A 188-amino-acid chain; its full sequence is uncharacterized protein (188 aa).

A helical membrane pass occupies residues 136–156 (TLVKLLLLFLSLMVVIVGVWW).

Its subcellular location is the host membrane. This is an uncharacterized protein from Magallana gigas (Pacific oyster).